The following is a 294-amino-acid chain: Probable 2-(5''-triphosphoribosyl)-3'-dephosphocoenzyme-A synthase (294 aa).

It belongs to the CitG/MdcB family.

The enzyme catalyses 3'-dephospho-CoA + ATP = 2'-(5''-triphospho-alpha-D-ribosyl)-3'-dephospho-CoA + adenine. The sequence is that of Probable 2-(5''-triphosphoribosyl)-3'-dephosphocoenzyme-A synthase from Streptococcus pyogenes serotype M49 (strain NZ131).